The following is a 158-amino-acid chain: Small ribosomal subunit protein uS9 (158 aa).

The protein belongs to the universal ribosomal protein uS9 family.

The protein is Small ribosomal subunit protein uS9 of Brucella anthropi (strain ATCC 49188 / DSM 6882 / CCUG 24695 / JCM 21032 / LMG 3331 / NBRC 15819 / NCTC 12168 / Alc 37) (Ochrobactrum anthropi).